A 292-amino-acid polypeptide reads, in one-letter code: NAD kinase (292 aa).

The active-site Proton acceptor is aspartate 73. NAD(+) contacts are provided by residues 73–74 (DG), 147–148 (NE), histidine 158, arginine 175, aspartate 177, 188–193 (TAYSLS), and glutamine 247.

Belongs to the NAD kinase family. Requires a divalent metal cation as cofactor.

The protein localises to the cytoplasm. It catalyses the reaction NAD(+) + ATP = ADP + NADP(+) + H(+). In terms of biological role, involved in the regulation of the intracellular balance of NAD and NADP, and is a key enzyme in the biosynthesis of NADP. Catalyzes specifically the phosphorylation on 2'-hydroxyl of the adenosine moiety of NAD to yield NADP. In Salmonella dublin (strain CT_02021853), this protein is NAD kinase.